Consider the following 246-residue polypeptide: Protein lin-37 homolog (246 aa).

Met-1 is modified (N-acetylmethionine). Glycyl lysine isopeptide (Lys-Gly) (interchain with G-Cter in SUMO2) cross-links involve residues Lys-5 and Lys-7. Residues 39-55 (RLDEEAGKTPLDTHNKD) are compositionally biased toward basic and acidic residues. 2 disordered regions span residues 39–90 (RLDE…GGPQ) and 129–208 (VRER…TLIY). Residues Ser-135 and Ser-138 each carry the phosphoserine modification. Thr-167 carries the phosphothreonine modification. Ser-182 and Ser-202 each carry phosphoserine.

As to quaternary structure, component of the DREAM complex (also named LINC complex) at least composed of E2F4, E2F5, LIN9, LIN37, LIN52, LIN54, MYBL1, MYBL2, RBL1, RBL2, RBBP4, TFDP1 and TFDP2. The complex exists in quiescent cells where it represses cell cycle-dependent genes. It dissociates in S phase when LIN9, LIN37, LIN52 and LIN54 form a subcomplex that binds to MYBL2.

This is Protein lin-37 homolog (Lin37) from Mus musculus (Mouse).